Consider the following 485-residue polypeptide: N-succinylglutamate 5-semialdehyde dehydrogenase (485 aa).

An NAD(+)-binding site is contributed by 220–225 (GSANTG). Residues glutamate 243 and cysteine 278 contribute to the active site.

Belongs to the aldehyde dehydrogenase family. AstD subfamily.

The catalysed reaction is N-succinyl-L-glutamate 5-semialdehyde + NAD(+) + H2O = N-succinyl-L-glutamate + NADH + 2 H(+). It functions in the pathway amino-acid degradation; L-arginine degradation via AST pathway; L-glutamate and succinate from L-arginine: step 4/5. Catalyzes the NAD-dependent reduction of succinylglutamate semialdehyde into succinylglutamate. In Vibrio cholerae serotype O1 (strain M66-2), this protein is N-succinylglutamate 5-semialdehyde dehydrogenase.